Here is a 175-residue protein sequence, read N- to C-terminus: Ribulose bisphosphate carboxylase small subunit, chloroplastic (175 aa).

The N-terminal 34 residues, 1–34 (MSFATTNKTIVPCATTKQIVRPRFLSNGTISKSR), are a transit peptide targeting the chloroplast.

It belongs to the RuBisCO small chain family. As to quaternary structure, heterohexadecamer of 8 large and 8 small subunits.

It is found in the plastid. It localises to the chloroplast. Functionally, ruBisCO catalyzes two reactions: the carboxylation of D-ribulose 1,5-bisphosphate, the primary event in carbon dioxide fixation, as well as the oxidative fragmentation of the pentose substrate. Both reactions occur simultaneously and in competition at the same active site. Although the small subunit is not catalytic it is essential for maximal activity. The polypeptide is Ribulose bisphosphate carboxylase small subunit, chloroplastic (Batophora oerstedii (Green alga)).